Here is a 479-residue protein sequence, read N- to C-terminus: Serine carboxypeptidase-like 44 (479 aa).

Residues 1 to 22 (MVGGKWRFLEVAVVVMVLQWSC) form the signal peptide. Disulfide bonds link Cys-92-Cys-352, Cys-253-Cys-270, and Cys-295-Cys-320. Asn-143 is a glycosylation site (N-linked (GlcNAc...) asparagine). Ser-184 is a catalytic residue. Asn-265 carries N-linked (GlcNAc...) asparagine glycosylation. Asn-341 carries N-linked (GlcNAc...) asparagine glycosylation. Asp-389 is an active-site residue. The N-linked (GlcNAc...) asparagine glycan is linked to Asn-411. His-446 is an active-site residue.

It belongs to the peptidase S10 family. Expressed in seedlings.

Its subcellular location is the secreted. In terms of biological role, probable carboxypeptidase. The polypeptide is Serine carboxypeptidase-like 44 (SCPL44) (Arabidopsis thaliana (Mouse-ear cress)).